Consider the following 446-residue polypeptide: Na(+)-translocating NADH-quinone reductase subunit A (446 aa).

Belongs to the NqrA family. Composed of six subunits; NqrA, NqrB, NqrC, NqrD, NqrE and NqrF.

The enzyme catalyses a ubiquinone + n Na(+)(in) + NADH + H(+) = a ubiquinol + n Na(+)(out) + NAD(+). With respect to regulation, this reaction is tightly coupled to the Na(+) pumping activity and specifically requires Na(+) for activity. Inhibited by korormicin and 2-N-heptyl-4-hydroxyquinoline N-oxide (HQNO). Functionally, NQR complex catalyzes the reduction of ubiquinone-1 to ubiquinol by two successive reactions, coupled with the transport of Na(+) ions from the cytoplasm to the periplasm. NqrA to NqrE are probably involved in the second step, the conversion of ubisemiquinone to ubiquinol. This chain is Na(+)-translocating NADH-quinone reductase subunit A, found in Vibrio alginolyticus.